A 28-amino-acid chain; its full sequence is Dermaseptin-2 (28 aa).

Glutamine amide is present on Gln-28.

Belongs to the frog skin active peptide (FSAP) family. Dermaseptin subfamily. In terms of tissue distribution, expressed by the skin glands.

Its subcellular location is the secreted. In terms of biological role, antimicrobial peptide with activity against the Gram-positive bacterium S.aureus, and the Gram-negative bacteria E.coli and P.aeruginosa. Probably acts by disturbing membrane functions with its amphipathic structure. Has an activity of stimulation of insulin release, which may protect the species from being eaten by predators by causing fatal hypoglycemia. Has hemolytic activity (60% hemolysis at 128 ug/ml). This is Dermaseptin-2 from Phyllomedusa tarsius (Brownbelly leaf frog).